The primary structure comprises 78 residues: Translation initiation factor IF-1 (78 aa).

Residues 4-78 form the S1-like domain; that stretch reads KFNNQAKQDK…LKLGRIIGRK (75 aa).

The protein belongs to the IF-1 family. As to quaternary structure, component of the 30S ribosomal translation pre-initiation complex which assembles on the 30S ribosome in the order IF-2 and IF-3, IF-1 and N-formylmethionyl-tRNA(fMet); mRNA recruitment can occur at any time during PIC assembly.

It localises to the cytoplasm. In terms of biological role, one of the essential components for the initiation of protein synthesis. Stabilizes the binding of IF-2 and IF-3 on the 30S subunit to which N-formylmethionyl-tRNA(fMet) subsequently binds. Helps modulate mRNA selection, yielding the 30S pre-initiation complex (PIC). Upon addition of the 50S ribosomal subunit IF-1, IF-2 and IF-3 are released leaving the mature 70S translation initiation complex. This Mycoplasma pneumoniae (strain ATCC 29342 / M129 / Subtype 1) (Mycoplasmoides pneumoniae) protein is Translation initiation factor IF-1.